We begin with the raw amino-acid sequence, 430 residues long: Glutamate-1-semialdehyde 2,1-aminomutase (430 aa).

Lys265 bears the N6-(pyridoxal phosphate)lysine mark.

The protein belongs to the class-III pyridoxal-phosphate-dependent aminotransferase family. HemL subfamily. Homodimer. The cofactor is pyridoxal 5'-phosphate.

The protein localises to the cytoplasm. It catalyses the reaction (S)-4-amino-5-oxopentanoate = 5-aminolevulinate. Its pathway is porphyrin-containing compound metabolism; protoporphyrin-IX biosynthesis; 5-aminolevulinate from L-glutamyl-tRNA(Glu): step 2/2. The chain is Glutamate-1-semialdehyde 2,1-aminomutase from Shewanella putrefaciens (strain CN-32 / ATCC BAA-453).